We begin with the raw amino-acid sequence, 349 residues long: Interleukin-10 receptor subunit beta (349 aa).

The signal sequence occupies residues 1 to 19 (MAPCVAGWLGGFLLVPALG). Residues 20–220 (MIPPPEKVRM…RTGNDEITPS (201 aa)) are Extracellular-facing. Fibronectin type-III domains lie at 23–111 (PPEK…VEDT) and 112–215 (IIGP…TGND). An N-linked (GlcNAc...) asparagine glycan is attached at asparagine 49. Cysteine 66 and cysteine 74 are disulfide-bonded. N-linked (GlcNAc...) asparagine glycans are attached at residues asparagine 102, asparagine 161, and asparagine 199. Residues cysteine 188 and cysteine 209 are joined by a disulfide bond. The helical transmembrane segment at 221 to 241 (WIVAIILIVSVLVVFLFLLGC) threads the bilayer. Topologically, residues 242 to 349 (FVVLWLIYKK…PKLLTSTSEV (108 aa)) are cytoplasmic. The residue at position 299 (serine 299) is a Phosphoserine. Residues 300–349 (EESEGSKQSPEDNCASEPPSDPGPRELESKDEAPSPPHDDPKLLTSTSEV) are disordered. Basic and acidic residues predominate over residues 322–341 (GPRELESKDEAPSPPHDDPK).

The protein belongs to the type II cytokine receptor family. In terms of assembly, heterodimer with IFNLR1.

The protein resides in the membrane. In terms of biological role, shared cell surface receptor required for the activation of five class 2 cytokines: IL10, IL22, IL26, IL28, and IFNL1. The IFNLR1/IL10RB dimer is a receptor for the cytokine ligands IFNL2 and IFNL3 and mediates their antiviral activity. The ligand/receptor complex stimulate the activation of the JAK/STAT signaling pathway leading to the expression of IFN-stimulated genes (ISG), which contribute to the antiviral state. This is Interleukin-10 receptor subunit beta (Il10rb) from Mus musculus (Mouse).